The chain runs to 407 residues: Arginine deiminase (407 aa).

Residue Cys397 is the Amidino-cysteine intermediate of the active site.

It belongs to the arginine deiminase family.

The protein resides in the cytoplasm. The enzyme catalyses L-arginine + H2O = L-citrulline + NH4(+). It functions in the pathway amino-acid degradation; L-arginine degradation via ADI pathway; carbamoyl phosphate from L-arginine: step 1/2. The protein is Arginine deiminase of Salmonella arizonae (strain ATCC BAA-731 / CDC346-86 / RSK2980).